We begin with the raw amino-acid sequence, 333 residues long: Glycerol-3-phosphate dehydrogenase [NAD(P)+] (333 aa).

Residues Trp-16, Arg-36, and Lys-109 each contribute to the NADPH site. Sn-glycerol 3-phosphate-binding residues include Lys-109, Gly-137, and Ser-139. An NADPH-binding site is contributed by Ala-141. Lys-192, Asp-245, Ser-255, Arg-256, and Asn-257 together coordinate sn-glycerol 3-phosphate. The active-site Proton acceptor is the Lys-192. Arg-256 provides a ligand contact to NADPH. 2 residues coordinate NADPH: Val-280 and Glu-282.

It belongs to the NAD-dependent glycerol-3-phosphate dehydrogenase family.

Its subcellular location is the cytoplasm. It catalyses the reaction sn-glycerol 3-phosphate + NAD(+) = dihydroxyacetone phosphate + NADH + H(+). The enzyme catalyses sn-glycerol 3-phosphate + NADP(+) = dihydroxyacetone phosphate + NADPH + H(+). It functions in the pathway membrane lipid metabolism; glycerophospholipid metabolism. Functionally, catalyzes the reduction of the glycolytic intermediate dihydroxyacetone phosphate (DHAP) to sn-glycerol 3-phosphate (G3P), the key precursor for phospholipid synthesis. This chain is Glycerol-3-phosphate dehydrogenase [NAD(P)+], found in Parvibaculum lavamentivorans (strain DS-1 / DSM 13023 / NCIMB 13966).